Here is a 680-residue protein sequence, read N- to C-terminus: Chondroitin proteoglycan 4 (680 aa).

The first 18 residues, 1–18 (MLRVNLLILLCFVPFSLN), serve as a signal peptide directing secretion. Residues Asn-42, Asn-59, Asn-72, Asn-167, Asn-205, Asn-458, Asn-472, Asn-486, Asn-498, Asn-526, Asn-527, Asn-556, and Asn-604 are each glycosylated (N-linked (GlcNAc...) asparagine). Residues 460-680 (TKKAETTKKS…PLTTTLHELY (221 aa)) form a disordered region. Low complexity predominate over residues 484 to 500 (AANTTAETTKTTSANIT). The span at 520 to 530 (SLDTSGNNSTV) shows a compositional bias: polar residues. Low complexity-rich tracts occupy residues 633–647 (GEASGEASGEASGEV) and 654–669 (SGYSGESPGENESSGE). 2 O-linked (Xyl...) (chondroitin sulfate) serine glycosylation sites follow: Ser-640 and Ser-644. Asn-664 carries an N-linked (GlcNAc...) asparagine glycan.

The chain is Chondroitin proteoglycan 4 (cpg-4) from Caenorhabditis briggsae.